Here is a 101-residue protein sequence, read N- to C-terminus: Small ribosomal subunit protein uS14 (101 aa).

The protein belongs to the universal ribosomal protein uS14 family. As to quaternary structure, part of the 30S ribosomal subunit. Contacts proteins S3 and S10.

Functionally, binds 16S rRNA, required for the assembly of 30S particles and may also be responsible for determining the conformation of the 16S rRNA at the A site. This is Small ribosomal subunit protein uS14 from Zymomonas mobilis subsp. mobilis (strain ATCC 31821 / ZM4 / CP4).